The primary structure comprises 172 residues: CD164 sialomucin-like 2 protein (172 aa).

Positions 1 to 29 (MAAPGPRALRAALCGGCCCLLLCAQLVLA) are cleaved as a signal peptide. Residues 30 to 137 (GKGARGFGRG…PEDHSPGFDG (108 aa)) lie on the Extracellular side of the membrane. 2 N-linked (GlcNAc...) asparagine glycosylation sites follow: N69 and N101. The disordered stretch occupies residues 108-132 (ASHHHSTEEPKPSTTGSPPIPEDHS). The chain crosses the membrane as a helical span at residues 138 to 158 (ASFIGGIVLVLSLQATAFFVL). At 159–172 (RFLKAKDSTYQTLI) the chain is on the cytoplasmic side.

It belongs to the CD164 family.

Its subcellular location is the membrane. The polypeptide is CD164 sialomucin-like 2 protein (Cd164l2) (Mus musculus (Mouse)).